Consider the following 264-residue polypeptide: Thymidylate synthase (264 aa).

R21 provides a ligand contact to dUMP. Position 51 (H51) interacts with (6R)-5,10-methylene-5,6,7,8-tetrahydrofolate. R126–R127 lines the dUMP pocket. The active-site Nucleophile is the C146. DUMP is bound by residues R166–D169, N177, and H207–Y209. D169 is a binding site for (6R)-5,10-methylene-5,6,7,8-tetrahydrofolate. A263 contributes to the (6R)-5,10-methylene-5,6,7,8-tetrahydrofolate binding site.

The protein belongs to the thymidylate synthase family. Bacterial-type ThyA subfamily. Homodimer.

The protein resides in the cytoplasm. It catalyses the reaction dUMP + (6R)-5,10-methylene-5,6,7,8-tetrahydrofolate = 7,8-dihydrofolate + dTMP. Its pathway is pyrimidine metabolism; dTTP biosynthesis. In terms of biological role, catalyzes the reductive methylation of 2'-deoxyuridine-5'-monophosphate (dUMP) to 2'-deoxythymidine-5'-monophosphate (dTMP) while utilizing 5,10-methylenetetrahydrofolate (mTHF) as the methyl donor and reductant in the reaction, yielding dihydrofolate (DHF) as a by-product. This enzymatic reaction provides an intracellular de novo source of dTMP, an essential precursor for DNA biosynthesis. The protein is Thymidylate synthase of Enterobacter sp. (strain 638).